We begin with the raw amino-acid sequence, 116 residues long: Large ribosomal subunit protein bL19 (116 aa).

Belongs to the bacterial ribosomal protein bL19 family.

This protein is located at the 30S-50S ribosomal subunit interface and may play a role in the structure and function of the aminoacyl-tRNA binding site. The chain is Large ribosomal subunit protein bL19 from Staphylococcus epidermidis (strain ATCC 35984 / DSM 28319 / BCRC 17069 / CCUG 31568 / BM 3577 / RP62A).